Consider the following 1040-residue polypeptide: V(D)J recombination-activating protein 1 (1040 aa).

A compositionally biased stretch (basic and acidic residues) spans 39–53; that stretch reads EKAPEEAQKEKDSSE. The interval 39–71 is disordered; it reads EKAPEEAQKEKDSSEGKPYLEQSPVVPEKPGGQ. Residue lysine 233 forms a Glycyl lysine isopeptide (Lys-Gly) (interchain with G-Cter in ubiquitin) linkage. Cysteine 266, histidine 270, cysteine 290, cysteine 293, histidine 295, cysteine 305, histidine 307, cysteine 310, cysteine 313, cysteine 325, cysteine 328, cysteine 355, cysteine 360, histidine 372, and histidine 376 together coordinate Zn(2+). An RING-type zinc finger spans residues 290-329; the sequence is CQICEHILADPVETSCKHLFCRICILRCLKVMGSYCPSCR. An RAG1-type zinc finger spans residues 351–380; sequence LMVKCPAQDCNEEVSLEKYNHHVSSHKESK. Residues 389–456 constitute a DNA-binding region (NBD); that stretch reads GGRPRQHLLS…QADELEAIMQ (68 aa). A divalent metal cation contacts are provided by aspartate 600, aspartate 708, and glutamate 962.

This sequence belongs to the RAG1 family. As to quaternary structure, homodimer. Component of the RAG complex composed of core components RAG1 and RAG2, and associated component HMGB1 or HMGB2. Interacts with DCAF1, leading to recruitment of the CUL4A-RBX1-DDB1-DCAF1/VPRBP complex to ubiquitinate proteins and limit error-prone repair during V(D)J recombination. It depends on Mg(2+) as a cofactor. The cofactor is Mn(2+). In terms of processing, autoubiquitinated in the presence of CDC34/UBCH3. Maturing lymphoid cells and central nervous system.

Its subcellular location is the nucleus. It carries out the reaction S-ubiquitinyl-[E2 ubiquitin-conjugating enzyme]-L-cysteine + [acceptor protein]-L-lysine = [E2 ubiquitin-conjugating enzyme]-L-cysteine + N(6)-ubiquitinyl-[acceptor protein]-L-lysine.. In terms of biological role, catalytic component of the RAG complex, a multiprotein complex that mediates the DNA cleavage phase during V(D)J recombination. V(D)J recombination assembles a diverse repertoire of immunoglobulin and T-cell receptor genes in developing B and T-lymphocytes through rearrangement of different V (variable), in some cases D (diversity), and J (joining) gene segments. In the RAG complex, RAG1 mediates the DNA-binding to the conserved recombination signal sequences (RSS) and catalyzes the DNA cleavage activities by introducing a double-strand break between the RSS and the adjacent coding segment. RAG2 is not a catalytic component but is required for all known catalytic activities. DNA cleavage occurs in 2 steps: a first nick is introduced in the top strand immediately upstream of the heptamer, generating a 3'-hydroxyl group that can attack the phosphodiester bond on the opposite strand in a direct transesterification reaction, thereby creating 4 DNA ends: 2 hairpin coding ends and 2 blunt, 5'-phosphorylated ends. The chromatin structure plays an essential role in the V(D)J recombination reactions and the presence of histone H3 trimethylated at 'Lys-4' (H3K4me3) stimulates both the nicking and haipinning steps. The RAG complex also plays a role in pre-B cell allelic exclusion, a process leading to expression of a single immunoglobulin heavy chain allele to enforce clonality and monospecific recognition by the B-cell antigen receptor (BCR) expressed on individual B-lymphocytes. The introduction of DNA breaks by the RAG complex on one immunoglobulin allele induces ATM-dependent repositioning of the other allele to pericentromeric heterochromatin, preventing accessibility to the RAG complex and recombination of the second allele. In addition to its endonuclease activity, RAG1 also acts as an E3 ubiquitin-protein ligase that mediates monoubiquitination of histone H3. Histone H3 monoubiquitination is required for the joining step of V(D)J recombination. Mediates polyubiquitination of KPNA1. The protein is V(D)J recombination-activating protein 1 (Rag1) of Mus musculus (Mouse).